Consider the following 304-residue polypeptide: GS homeobox 2 (304 aa).

Residues 116 to 151 (AQFCPRVNHAHHHHHPPQHHHHHHQPQQPGSAAAAA) form a disordered region. Positions 123 to 140 (NHAHHHHHPPQHHHHHHQ) are enriched in basic residues. Residues 141-151 (PQQPGSAAAAA) show a composition bias toward low complexity. The segment at residues 202-261 (GKRMRTAFTSTQLLELEREFSSNMYLSRLRRIEIATYLNLSEKQVKIWFQNRRVKHKKEG) is a DNA-binding region (homeobox). A disordered region spans residues 283-304 (RSEDEDSLSPASANDDKEISPL).

The protein belongs to the Antp homeobox family.

It localises to the nucleus. Its subcellular location is the cytoplasm. In terms of biological role, transcription factor that binds 5'-CNAATTAG-3' DNA sequence and regulates the expression of numerous genes including genes important for brain development. During telencephalic development, causes ventralization of pallial progenitors and, depending on the developmental stage, specifies different neuronal fates. At early stages, necessary and sufficient to correctly specify the ventral lateral ganglionic eminence (LGE) and its major derivatives, the striatal projection neurons. At later stages, may specify LGE progenitors toward dorsal LGE fates, including olfactory bulb interneurons. The polypeptide is GS homeobox 2 (GSX2) (Homo sapiens (Human)).